Here is a 466-residue protein sequence, read N- to C-terminus: Asparagine--tRNA ligase (466 aa).

Belongs to the class-II aminoacyl-tRNA synthetase family. Homodimer.

It localises to the cytoplasm. The catalysed reaction is tRNA(Asn) + L-asparagine + ATP = L-asparaginyl-tRNA(Asn) + AMP + diphosphate + H(+). The protein is Asparagine--tRNA ligase of Pectobacterium atrosepticum (strain SCRI 1043 / ATCC BAA-672) (Erwinia carotovora subsp. atroseptica).